A 201-amino-acid polypeptide reads, in one-letter code: Transgelin (201 aa).

Alanine 2 is modified (N-acetylalanine). Residues 24-137 (EELEERLVEW…RTVMALGSLA (114 aa)) form the Calponin-homology (CH) domain. Residues 154-161 (KKAQEHKR) are could be involved in actin-binding. The residue at position 166 (serine 166) is a Phosphoserine. Lysine 172 is subject to N6-acetyllysine. The stretch at 175-200 (IGLQMGSNRGASQAGMTGYGRPRQII) is one Calponin-like repeat. Position 181 is a phosphoserine (serine 181). The residue at position 183 (arginine 183) is an Omega-N-methylarginine.

It belongs to the calponin family. In terms of tissue distribution, smooth muscle and mesenchymal cells but not in skeletal muscle or lymphocytes.

Its subcellular location is the cytoplasm. Actin cross-linking/gelling protein. In Rattus norvegicus (Rat), this protein is Transgelin (Tagln).